A 329-amino-acid chain; its full sequence is Solute carrier family 35 member B1 (329 aa).

The next 8 membrane-spanning stretches (helical) occupy residues 21–41, 60–80, 91–111, 142–162, 175–195, 220–240, 250–270, and 292–312; these read AVCF…QETI, TLVF…IQFF, WLYG…NSAL, YPMA…LFLY, VFGF…LTGV, TLVL…LAFT, ILLF…TVVY, and VLLF…LVFL. The short motif at 325 to 329 is the Di-lysine motif element; it reads KKTTH.

Belongs to the nucleotide-sugar transporter family. SLC35B subfamily.

It is found in the endoplasmic reticulum membrane. Probable sugar transporter. This Danio rerio (Zebrafish) protein is Solute carrier family 35 member B1 (slc35b1).